The following is a 255-amino-acid chain: Acetyl-coenzyme A carboxylase carboxyl transferase subunit alpha (255 aa).

A CoA carboxyltransferase C-terminal domain is found at 1–235 (MNIAKIVREA…KKELQTELAR (235 aa)).

This sequence belongs to the AccA family. In terms of assembly, acetyl-CoA carboxylase is a heterohexamer composed of biotin carboxyl carrier protein (AccB), biotin carboxylase (AccC) and two subunits each of ACCase subunit alpha (AccA) and ACCase subunit beta (AccD).

The protein resides in the cytoplasm. The enzyme catalyses N(6)-carboxybiotinyl-L-lysyl-[protein] + acetyl-CoA = N(6)-biotinyl-L-lysyl-[protein] + malonyl-CoA. It functions in the pathway lipid metabolism; malonyl-CoA biosynthesis; malonyl-CoA from acetyl-CoA: step 1/1. Its function is as follows. Component of the acetyl coenzyme A carboxylase (ACC) complex. First, biotin carboxylase catalyzes the carboxylation of biotin on its carrier protein (BCCP) and then the CO(2) group is transferred by the carboxyltransferase to acetyl-CoA to form malonyl-CoA. The chain is Acetyl-coenzyme A carboxylase carboxyl transferase subunit alpha from Streptococcus pneumoniae serotype 2 (strain D39 / NCTC 7466).